Consider the following 251-residue polypeptide: Aspartate/glutamate leucyltransferase (251 aa).

Belongs to the R-transferase family. Bpt subfamily.

The protein localises to the cytoplasm. It carries out the reaction N-terminal L-glutamyl-[protein] + L-leucyl-tRNA(Leu) = N-terminal L-leucyl-L-glutamyl-[protein] + tRNA(Leu) + H(+). The catalysed reaction is N-terminal L-aspartyl-[protein] + L-leucyl-tRNA(Leu) = N-terminal L-leucyl-L-aspartyl-[protein] + tRNA(Leu) + H(+). Functionally, functions in the N-end rule pathway of protein degradation where it conjugates Leu from its aminoacyl-tRNA to the N-termini of proteins containing an N-terminal aspartate or glutamate. In Xanthomonas axonopodis pv. citri (strain 306), this protein is Aspartate/glutamate leucyltransferase.